Consider the following 445-residue polypeptide: Asparagine--tRNA ligase (445 aa).

The protein belongs to the class-II aminoacyl-tRNA synthetase family. In terms of assembly, homodimer.

It is found in the cytoplasm. It catalyses the reaction tRNA(Asn) + L-asparagine + ATP = L-asparaginyl-tRNA(Asn) + AMP + diphosphate + H(+). This chain is Asparagine--tRNA ligase, found in Deinococcus deserti (strain DSM 17065 / CIP 109153 / LMG 22923 / VCD115).